We begin with the raw amino-acid sequence, 350 residues long: Guanine nucleotide-binding protein G(t) subunit alpha-1 (350 aa).

Residues 1-21 (MGAGASAEEKHSRELEKKLKE) form a disordered region. Gly-2 carries N-myristoyl glycine lipidation. Over residues 7-21 (AEEKHSRELEKKLKE) the composition is skewed to basic and acidic residues. Positions 28–350 (RTVKLLLLGA…KENLKDCGLF (323 aa)) constitute a G-alpha domain. The interval 31–44 (KLLLLGAGESGKST) is G1 motif. 36-43 (GAGESGKS) is a GTP binding site. Ser-43 is a Mg(2+) binding site. Tyr-142 bears the Phosphotyrosine mark. Residues Asp-146, 171-177 (LRSRVKT), Gly-199, 265-268 (NKKD), and Ala-322 contribute to the GTP site. The segment at 169-177 (DVLRSRVKT) is G2 motif. Thr-177 contributes to the Mg(2+) binding site. Positions 192 to 201 (FRMFDVGGQR) are G3 motif. The G4 motif stretch occupies residues 261–268 (VLFLNKKD). The segment at 320–325 (TCATDT) is G5 motif. Residues 340 to 350 (IKENLKDCGLF) are interaction with RHO.

This sequence belongs to the G-alpha family. G(i/o/t/z) subfamily. As to quaternary structure, heterotrimeric G proteins are composed of 3 subunits alpha, beta and gamma. The alpha chain contains the guanine nucleotide binding site. Interacts with RHO. Interacts with RGS9 and PDE6G. Interacts (when myristoylated) with UNC119; interaction is required for localization in sensory neurons. As to expression, in the retina, expressed in the rod photoreceptors.

The protein resides in the cell projection. Its subcellular location is the cilium. It is found in the photoreceptor outer segment. It localises to the membrane. The protein localises to the photoreceptor inner segment. In terms of biological role, functions as a signal transducer for the rod photoreceptor RHO. Required for normal RHO-mediated light perception by the retina. Guanine nucleotide-binding proteins (G proteins) function as transducers downstream of G protein-coupled receptors (GPCRs), such as the photoreceptor RHO. The alpha chain contains the guanine nucleotide binding site and alternates between an active, GTP-bound state and an inactive, GDP-bound state. Activated RHO promotes GDP release and GTP binding. Signaling is mediated via downstream effector proteins, such as cGMP-phosphodiesterase. The chain is Guanine nucleotide-binding protein G(t) subunit alpha-1 (Gnat1) from Mus musculus (Mouse).